Reading from the N-terminus, the 450-residue chain is MSLRLPSGSRRASPRPTTGSLRLSGAGASFGAGNACSMPGIGSSFSCAFGSSSSGGNALGGNPCAGFTMNEGGLLSGNEKVTMQNLNDRLASYLENVRALEEANADLEQKIKGWYEKFGPGSCRGLDHDYSRYFPIIEDLKNQIIASTTSNANAVLQIDNARLTADDFRLKYENELALHQSVESDVNGLRRVLDEITLCRTDLEIQYETLSEELTYLKKNHKEEMQVLQCAAGGNVNVEMNAAPGVDLTVLLNNMRAEYEALAEQNRRDAEAWFNEKSASLQQQITEDVGATTSARNELTEMKRNLQTLEIELQSLLATKHSLECSLTETEGNYCAQLAQIQAQIGALEEQLHQVRTETEGQKLEYEQLLDIKVHLEKEIETYCLLIGGDDGACKSGGYKSKDYAAGNMGNQMKDPIKAIVVKKVLEEVDQRSKILTTRLHSLEEKSQSN.

Residues 1–24 (MSLRLPSGSRRASPRPTTGSLRLS) are disordered. The interval 1 to 78 (MSLRLPSGSR…MNEGGLLSGN (78 aa)) is head. Residues 79 to 114 (EKVTMQNLNDRLASYLENVRALEEANADLEQKIKGW) are coil 1A. The IF rod domain occupies 79–394 (EKVTMQNLND…LLIGGDDGAC (316 aa)). A linker 1 region spans residues 115 to 136 (YEKFGPGSCRGLDHDYSRYFPI). Positions 137 to 228 (IEDLKNQIIA…KNHKEEMQVL (92 aa)) are coil 1B. Positions 229-251 (QCAAGGNVNVEMNAAPGVDLTVL) are linker 12. The interval 252 to 390 (LNNMRAEYEA…ETYCLLIGGD (139 aa)) is coil 2. The tail stretch occupies residues 391 to 450 (DGACKSGGYKSKDYAAGNMGNQMKDPIKAIVVKKVLEEVDQRSKILTTRLHSLEEKSQSN). Ser-442 is subject to Phosphoserine.

The protein belongs to the intermediate filament family. As to quaternary structure, heterodimer of a type I and a type II keratin. Heterodimer with type II keratin KRT5 leading to the formation of keratin intermediate filament (KIF) network. Interacts with KRT6A to form filaments.

It localises to the cytoplasm. Functionally, essential for the proper assembly of type I and type II keratin protein complexes and formation of keratin intermediate filaments in the inner root sheath (irs). Plays a role in the cytoskeleton organization. The sequence is that of Keratin, type I cytoskeletal 25 from Capra hircus (Goat).